Here is a 38-residue protein sequence, read N- to C-terminus: Photosystem II reaction center protein L (38 aa).

Residues 17 to 37 (SLYWGLLLIFVLAVLFSSYIF) traverse the membrane as a helical segment.

Belongs to the PsbL family. As to quaternary structure, PSII is composed of 1 copy each of membrane proteins PsbA, PsbB, PsbC, PsbD, PsbE, PsbF, PsbH, PsbI, PsbJ, PsbK, PsbL, PsbM, PsbT, PsbX, PsbY, PsbZ, Psb30/Ycf12, at least 3 peripheral proteins of the oxygen-evolving complex and a large number of cofactors. It forms dimeric complexes.

It is found in the plastid. It localises to the chloroplast thylakoid membrane. One of the components of the core complex of photosystem II (PSII). PSII is a light-driven water:plastoquinone oxidoreductase that uses light energy to abstract electrons from H(2)O, generating O(2) and a proton gradient subsequently used for ATP formation. It consists of a core antenna complex that captures photons, and an electron transfer chain that converts photonic excitation into a charge separation. This subunit is found at the monomer-monomer interface and is required for correct PSII assembly and/or dimerization. This chain is Photosystem II reaction center protein L, found in Tupiella akineta (Green alga).